The sequence spans 841 residues: MPLRRFSPGLKAQFAFGMVFLFVQPDASAADISAQQIGGVIIPQAFSQALQDGMSVPLYIHLAGSQGRQDDQRIGSAFIWLDDGQLRIRKIQLEESEDNASVSEQTRQQLMTLANAPFNEALTIPLTDNAQLDLSLRQLLLQLVVKREALGTVLRSRSEDIGQSSVNTLSSNLSYNFGVYNNQLRNGGSNTSSYLSLNNVTALREHHVVLDGSLYGIGSGQQDSELYKAMYERDFAGHRFAGGMLDTWNLQSLGPMTAISAGKIYGLSWGNQASSTIFDSSQSATPVIAFLPAAGEVHLTRDGRLLSVQNFTMGNHEVDTRGLPYGIYDVEVEVIVNGRVISKRTQRVNKLFSRGRGVGAPLAWQIWGGSFHMDRWSENGKKTRPAKESWLAGASTSGSLSTFSWAATGYGYDNQAVGETRLTLPLGGAINVNLQNMLASDSSWSNIASISATLPGGFSSLWVNQEKTRIGNQLRRSDADNRAIGGTLNLNSLWSKLGTFSISYNDDRRYNSHYYTADYYQSVYSGTFGSLGLRAGIQRYNNGDSSANTGKYIALDLSLPLGNWFSAGMTHQNGYTMANLSARKQFDEGTIRTVGANLSRAISGDTGDDKTLSGGAYAQFDARYASGTLNVNSAADGYINTNLTANGSVGWQGKNIAASGRTDGNAGVIFDTGLENDGQISAKINGRIFPLNGKRNYLPLSPYGRYEVELQNSKNSLDSYDIVSGRKSHLTLYPGNVAVIEPEVKQMVTVSGRIRAEDGTLLANARINNHIGRTRTDENGEFVMDVDKKYPTIDFRYSGNKTCEVALELNQARGAVWVGDVVCSGLSSWAAVTQTGEENES.

The first 29 residues, 1–29, serve as a signal peptide directing secretion; it reads MPLRRFSPGLKAQFAFGMVFLFVQPDASA.

Belongs to the EcpC/MatD family.

Part of the ecpRABCDE operon, which encodes the E.coli common pilus (ECP). ECP is found in both commensal and pathogenic strains and plays a dual role in early-stage biofilm development and host cell recognition. This chain is Probable outer membrane usher protein EcpC (ecpC), found in Escherichia coli O18:K1:H7 (strain IHE3034 / ExPEC).